Consider the following 508-residue polypeptide: Photosystem II CP47 reaction center protein (508 aa).

Transmembrane regions (helical) follow at residues 21-36 (SVHI…WAGS), 101-115 (IVFS…IWHW), 140-156 (GIHL…FGAF), 203-218 (IAAG…FHLS), 237-252 (VLSS…AFVV), and 457-472 (SFAL…HGAR).

Belongs to the PsbB/PsbC family. PsbB subfamily. As to quaternary structure, PSII is composed of 1 copy each of membrane proteins PsbA, PsbB, PsbC, PsbD, PsbE, PsbF, PsbH, PsbI, PsbJ, PsbK, PsbL, PsbM, PsbT, PsbX, PsbY, PsbZ, Psb30/Ycf12, at least 3 peripheral proteins of the oxygen-evolving complex and a large number of cofactors. It forms dimeric complexes. The cofactor is Binds multiple chlorophylls. PSII binds additional chlorophylls, carotenoids and specific lipids..

Its subcellular location is the plastid. It localises to the chloroplast thylakoid membrane. One of the components of the core complex of photosystem II (PSII). It binds chlorophyll and helps catalyze the primary light-induced photochemical processes of PSII. PSII is a light-driven water:plastoquinone oxidoreductase, using light energy to abstract electrons from H(2)O, generating O(2) and a proton gradient subsequently used for ATP formation. This Manihot esculenta (Cassava) protein is Photosystem II CP47 reaction center protein.